The chain runs to 186 residues: UPF0301 protein LHK_02881 (186 aa).

This sequence belongs to the UPF0301 (AlgH) family.

In Laribacter hongkongensis (strain HLHK9), this protein is UPF0301 protein LHK_02881.